We begin with the raw amino-acid sequence, 495 residues long: Probable cytochrome P450 508C1 (495 aa).

The chain crosses the membrane as a helical span at residues 3-21; the sequence is LLNSLLLLFLIYLIHSFYI. Position 442 (C442) interacts with heme.

The protein belongs to the cytochrome P450 family. Heme serves as cofactor.

The protein localises to the membrane. This is Probable cytochrome P450 508C1 (cyp508C1) from Dictyostelium discoideum (Social amoeba).